A 352-amino-acid polypeptide reads, in one-letter code: Photosystem II D2 protein (352 aa).

Threonine 2 carries the post-translational modification N-acetylthreonine. Threonine 2 is modified (phosphothreonine). The chain crosses the membrane as a helical span at residues 40 to 60 (CAYMALGGWLTGTTFVTSWYT). A chlorophyll a-binding site is contributed by histidine 117. A helical transmembrane segment spans residues 124–140 (GFMLRQFEIAQSLKLRP). Pheophytin a contacts are provided by glutamine 129 and asparagine 142. Residues 152 to 165 (VFVSVFLIYPLGQA) traverse the membrane as a helical segment. Residue histidine 197 participates in chlorophyll a binding. Residues 207-227 (AALLCAIHGATVENTLFEDGD) form a helical membrane-spanning segment. Residues histidine 214 and phenylalanine 261 each coordinate a plastoquinone. Histidine 214 contacts Fe cation. Histidine 268 contacts Fe cation. The helical transmembrane segment at 278-294 (GLWMSAIGVVGLALNLR) threads the bilayer.

Belongs to the reaction center PufL/M/PsbA/D family. PSII is composed of 1 copy each of membrane proteins PsbA, PsbB, PsbC, PsbD, PsbE, PsbF, PsbH, PsbI, PsbJ, PsbK, PsbL, PsbM, PsbT, PsbX, PsbY, PsbZ, Psb30/Ycf12, at least 3 peripheral proteins of the oxygen-evolving complex and a large number of cofactors. It forms dimeric complexes. The D1/D2 heterodimer binds P680, chlorophylls that are the primary electron donor of PSII, and subsequent electron acceptors. It shares a non-heme iron and each subunit binds pheophytin, quinone, additional chlorophylls, carotenoids and lipids. There is also a Cl(-1) ion associated with D1 and D2, which is required for oxygen evolution. The PSII complex binds additional chlorophylls, carotenoids and specific lipids. serves as cofactor.

The protein resides in the plastid. It localises to the chloroplast thylakoid membrane. It catalyses the reaction 2 a plastoquinone + 4 hnu + 2 H2O = 2 a plastoquinol + O2. Its function is as follows. Photosystem II (PSII) is a light-driven water:plastoquinone oxidoreductase that uses light energy to abstract electrons from H(2)O, generating O(2) and a proton gradient subsequently used for ATP formation. It consists of a core antenna complex that captures photons, and an electron transfer chain that converts photonic excitation into a charge separation. The D1/D2 (PsbA/PsbD) reaction center heterodimer binds P680, the primary electron donor of PSII as well as several subsequent electron acceptors. D2 is needed for assembly of a stable PSII complex. The chain is Photosystem II D2 protein from Stigeoclonium helveticum (Green alga).